Reading from the N-terminus, the 282-residue chain is Sulfur carrier protein FdhD (282 aa).

Residue C126 is the Cysteine persulfide intermediate of the active site. 265–270 serves as a coordination point for Mo-bis(molybdopterin guanine dinucleotide); that stretch reads FVRNNR.

It belongs to the FdhD family.

Its subcellular location is the cytoplasm. Required for formate dehydrogenase (FDH) activity. Acts as a sulfur carrier protein that transfers sulfur from IscS to the molybdenum cofactor prior to its insertion into FDH. The chain is Sulfur carrier protein FdhD from Thermoplasma acidophilum (strain ATCC 25905 / DSM 1728 / JCM 9062 / NBRC 15155 / AMRC-C165).